We begin with the raw amino-acid sequence, 398 residues long: S-adenosylmethionine decarboxylase proenzyme (398 aa).

Active-site residues include Glu-18 and Glu-21. Catalysis depends on Ser-78, which acts as the Schiff-base intermediate with substrate; via pyruvic acid. Position 78 is a pyruvic acid (Ser); by autocatalysis (Ser-78). Cys-92 acts as the Proton donor; for catalytic activity in catalysis. Catalysis depends on proton acceptor; for processing activity residues Ser-243 and His-256.

Belongs to the eukaryotic AdoMetDC family. Pyruvate is required as a cofactor. Post-translationally, is synthesized initially as an inactive proenzyme. Formation of the active enzyme involves a self-maturation process in which the active site pyruvoyl group is generated from an internal serine residue via an autocatalytic post-translational modification. Two non-identical subunits are generated from the proenzyme in this reaction, and the pyruvate is formed at the N-terminus of the alpha chain, which is derived from the carboxyl end of the proenzyme. The post-translation cleavage follows an unusual pathway, termed non-hydrolytic serinolysis, in which the side chain hydroxyl group of the serine supplies its oxygen atom to form the C-terminus of the beta chain, while the remainder of the serine residue undergoes an oxidative deamination to produce ammonia and the pyruvoyl group blocking the N-terminus of the alpha chain.

The enzyme catalyses S-adenosyl-L-methionine + H(+) = S-adenosyl 3-(methylsulfanyl)propylamine + CO2. The protein operates within amine and polyamine biosynthesis; S-adenosylmethioninamine biosynthesis; S-adenosylmethioninamine from S-adenosyl-L-methionine: step 1/1. The polypeptide is S-adenosylmethionine decarboxylase proenzyme (SAMDC) (Oryza sativa subsp. indica (Rice)).